The following is a 162-amino-acid chain: Caveolin-2 (162 aa).

Residues 1–86 (MGLETEKADV…FEMSKYVIYK (86 aa)) lie on the Cytoplasmic side of the membrane. Tyrosine 19 is modified (phosphotyrosine; by SRC). Residues serine 20 and serine 23 each carry the phosphoserine modification. Tyrosine 27 bears the Phosphotyrosine; by SRC mark. An intramembrane region (helical) is located at residues 87-107 (FLTVFLAIPLAFAAGILFATL). Residues 108-162 (SCLHIWIIMPFVKTCLMVLPSVQTIWKSVTDVVIAPLCTSVGRSFSSVSLQLSHD) are Cytoplasmic-facing.

The protein belongs to the caveolin family. In terms of assembly, monomer or homodimer. Interacts with CAV1; the interaction forms a stable heterooligomeric complex that is required for targeting to lipid rafts and for caveolae formation. Tyrosine phosphorylated forms do not form heterooligomers with the Tyr-19-phosphorylated form existing as a monomer or dimer, and the Tyr-27-form as a monomer only. Interacts (tyrosine phosphorylated form) with the SH2 domain-containing proteins, RASA1, NCK1 and SRC. Interacts (tyrosine phosphorylated form) with INSR, the interaction (Tyr-27-phosphorylated form) is increased on insulin stimulation. Interacts (Tyr-19 phosphorylated form) with MAPK1 (phosphorylated form); the interaction, promoted by insulin, leads to nuclear location and MAPK1 activation. Interacts with STAT3; the interaction is increased on insulin-induced tyrosine phosphorylation leading to STAT activation. Phosphorylated on serine and tyrosine residues. CAV1 promotes phosphorylation on Ser-23 which then targets the complex to the plasma membrane, lipid rafts and caveolae. Phosphorylation on both Tyr-19 and Tyr-27 is required for insulin-induced 'Ser-727' phosphorylation of STAT3 and its activation. Phosphorylation on Tyr-19 is required for insulin-induced phosphorylation of MAPK1 and DNA binding of STAT3. Tyrosine phosphorylation is induced by both EGF and insulin.

Its subcellular location is the nucleus. The protein resides in the cytoplasm. It localises to the golgi apparatus membrane. The protein localises to the cell membrane. It is found in the membrane. Its subcellular location is the caveola. Functionally, may act as a scaffolding protein within caveolar membranes. Interacts directly with G-protein alpha subunits and can functionally regulate their activity. Acts as an accessory protein in conjunction with CAV1 in targeting to lipid rafts and driving caveolae formation. Positive regulator of cellular mitogenesis of the MAPK signaling pathway. Required for the insulin-stimulated nuclear translocation and activation of MAPK1 and STAT3, and the subsequent regulation of cell cycle progression. The protein is Caveolin-2 (CAV2) of Muntiacus muntjak (Barking deer).